A 1093-amino-acid polypeptide reads, in one-letter code: Protein AF-17 (1093 aa).

The PHD-type 1 zinc finger occupies 5–57 (VGGCCVCSDERGWAENPLVYCDGHACSVAVHQACYGIVQVPTGPWFCRKCESQ). The C2HC pre-PHD-type zinc finger occupies 62-95 (RVRCELCPHKDGALKRTDNGGWAHVVCALYIPEV). The PHD-type 2 zinc finger occupies 118–181 (KTCYICEEQG…KYCGYCKYHF (64 aa)). A disordered region spans residues 185 to 500 (KTSRHSSGGG…GGPAAPSLPS (316 aa)). Over residues 191–212 (SGGGGGGAGGGGGSMGGGGSGF) the composition is skewed to gly residues. Residues 231–255 (PTHHERGQKKSRKDKERLKQKHKKR) are compositionally biased toward basic residues. Ser-258 carries the phosphoserine modification. Pro residues predominate over residues 258-268 (SPPSILTPPVV). Basic and acidic residues predominate over residues 282–300 (SHHEASTQETSESSRESKG). A compositionally biased stretch (basic residues) spans 301–316 (KKSSSHSLSHKGKKLS). The span at 317–340 (SGKGVSSFTSASSSSSSSSSSSGG) shows a compositional bias: low complexity. The span at 345–354 (AVSSLQSSPD) shows a compositional bias: polar residues. The segment covering 374–388 (APAPSAPPSPSAPEP) has biased composition (pro residues). Phosphoserine occurs at positions 378 and 423. The segment covering 410-425 (STTTSSSGRARAPSPG) has biased composition (low complexity). Thr-451 is modified (phosphothreonine). Positions 465–484 (EKKHKASKRSRHGPGRPKGS) are enriched in basic residues. The tract at residues 729-764 (LQKENQRLQEQILSLTAKKERLQILNVQLSVPFPAL) is leucine-zipper. 2 disordered regions span residues 775 to 871 (VPGP…RAPG) and 1060 to 1093 (QTNP…QEKG). Low complexity predominate over residues 787 to 796 (SSDSLSTSKS). Positions 804 to 813 (GLDNSLSTSS) are enriched in polar residues. 2 stretches are compositionally biased toward low complexity: residues 818 to 832 (SGCP…SFHS) and 839 to 853 (LLQQ…ALPG).

In terms of assembly, interacts with histone H3; interaction is necessary for MLLT6 binding to nucleosomes; interaction is inhibited by histone H3 'Lys-27' methylations (H3K27me1, H3K27me2 and H3K27me3).

It is found in the nucleus. The sequence is that of Protein AF-17 (MLLT6) from Homo sapiens (Human).